A 199-amino-acid polypeptide reads, in one-letter code: ATP-dependent Clp protease proteolytic subunit 2 (199 aa).

The active-site Nucleophile is Ser98. His123 is a catalytic residue.

Belongs to the peptidase S14 family. In terms of assembly, fourteen ClpP subunits assemble into 2 heptameric rings which stack back to back to give a disk-like structure with a central cavity, resembling the structure of eukaryotic proteasomes.

It is found in the cytoplasm. It carries out the reaction Hydrolysis of proteins to small peptides in the presence of ATP and magnesium. alpha-casein is the usual test substrate. In the absence of ATP, only oligopeptides shorter than five residues are hydrolyzed (such as succinyl-Leu-Tyr-|-NHMec, and Leu-Tyr-Leu-|-Tyr-Trp, in which cleavage of the -Tyr-|-Leu- and -Tyr-|-Trp bonds also occurs).. Cleaves peptides in various proteins in a process that requires ATP hydrolysis. Has a chymotrypsin-like activity. Plays a major role in the degradation of misfolded proteins. The sequence is that of ATP-dependent Clp protease proteolytic subunit 2 from Corynebacterium efficiens (strain DSM 44549 / YS-314 / AJ 12310 / JCM 11189 / NBRC 100395).